The chain runs to 77 residues: Acyl carrier protein (77 aa).

The Carrier domain occupies 2–77 (SSIEKRVKEI…DAIDYITEHT (76 aa)). Position 37 is an O-(pantetheine 4'-phosphoryl)serine (Ser37).

The protein belongs to the acyl carrier protein (ACP) family. In terms of processing, 4'-phosphopantetheine is transferred from CoA to a specific serine of apo-ACP by AcpS. This modification is essential for activity because fatty acids are bound in thioester linkage to the sulfhydryl of the prosthetic group.

Its subcellular location is the cytoplasm. Its pathway is lipid metabolism; fatty acid biosynthesis. Its function is as follows. Carrier of the growing fatty acid chain in fatty acid biosynthesis. This chain is Acyl carrier protein, found in Geobacter sulfurreducens (strain ATCC 51573 / DSM 12127 / PCA).